A 151-amino-acid chain; its full sequence is NADPH-dependent 7-cyano-7-deazaguanine reductase (151 aa).

Residue Cys-51 is the Thioimide intermediate of the active site. The active-site Proton donor is Asp-58. Substrate contacts are provided by residues 73-75 (VES) and 92-93 (HE).

The protein belongs to the GTP cyclohydrolase I family. QueF type 1 subfamily.

It localises to the cytoplasm. It carries out the reaction 7-aminomethyl-7-carbaguanine + 2 NADP(+) = 7-cyano-7-deazaguanine + 2 NADPH + 3 H(+). It participates in tRNA modification; tRNA-queuosine biosynthesis. Its function is as follows. Catalyzes the NADPH-dependent reduction of 7-cyano-7-deazaguanine (preQ0) to 7-aminomethyl-7-deazaguanine (preQ1). The polypeptide is NADPH-dependent 7-cyano-7-deazaguanine reductase (Bacteroides fragilis (strain ATCC 25285 / DSM 2151 / CCUG 4856 / JCM 11019 / LMG 10263 / NCTC 9343 / Onslow / VPI 2553 / EN-2)).